The chain runs to 281 residues: 4-diphosphocytidyl-2-C-methyl-D-erythritol kinase (281 aa).

Residue Lys-15 is part of the active site. Pro-98–Ser-108 is a binding site for ATP. Asp-140 is a catalytic residue.

It belongs to the GHMP kinase family. IspE subfamily.

It catalyses the reaction 4-CDP-2-C-methyl-D-erythritol + ATP = 4-CDP-2-C-methyl-D-erythritol 2-phosphate + ADP + H(+). The protein operates within isoprenoid biosynthesis; isopentenyl diphosphate biosynthesis via DXP pathway; isopentenyl diphosphate from 1-deoxy-D-xylulose 5-phosphate: step 3/6. Functionally, catalyzes the phosphorylation of the position 2 hydroxy group of 4-diphosphocytidyl-2C-methyl-D-erythritol. The sequence is that of 4-diphosphocytidyl-2-C-methyl-D-erythritol kinase from Neisseria gonorrhoeae (strain ATCC 700825 / FA 1090).